The primary structure comprises 130 residues: DNA-binding protein HU (130 aa).

Belongs to the bacterial histone-like protein family.

In terms of biological role, histone-like DNA-binding protein which is capable of wrapping DNA to stabilize it, and thus to prevent its denaturation under extreme environmental conditions. The polypeptide is DNA-binding protein HU (hup) (Ureaplasma parvum serovar 3 (strain ATCC 700970)).